The primary structure comprises 847 residues: DNA gyrase subunit A (847 aa).

The 500-residue stretch at 34-533 (LPDVRDGLKP…NYSDINTSDL (500 aa)) folds into the Topo IIA-type catalytic domain. The O-(5'-phospho-DNA)-tyrosine intermediate role is filled by Tyr122. The GyrA-box signature appears at 560 to 566 (QKRGGKG).

The protein belongs to the type II topoisomerase GyrA/ParC subunit family. As to quaternary structure, heterotetramer, composed of two GyrA and two GyrB chains. In the heterotetramer, GyrA contains the active site tyrosine that forms a transient covalent intermediate with DNA, while GyrB binds cofactors and catalyzes ATP hydrolysis.

Its subcellular location is the cytoplasm. It carries out the reaction ATP-dependent breakage, passage and rejoining of double-stranded DNA.. In terms of biological role, a type II topoisomerase that negatively supercoils closed circular double-stranded (ds) DNA in an ATP-dependent manner to modulate DNA topology and maintain chromosomes in an underwound state. Negative supercoiling favors strand separation, and DNA replication, transcription, recombination and repair, all of which involve strand separation. Also able to catalyze the interconversion of other topological isomers of dsDNA rings, including catenanes and knotted rings. Type II topoisomerases break and join 2 DNA strands simultaneously in an ATP-dependent manner. In Buchnera aphidicola subsp. Baizongia pistaciae (strain Bp), this protein is DNA gyrase subunit A.